The sequence spans 397 residues: Digeranylgeranylglycerophospholipid reductase 1 (397 aa).

Residues alanine 18, aspartate 37, cysteine 48, alanine 49, glycine 51, arginine 104, alanine 128, aspartate 284, glycine 296, and isoleucine 297 each contribute to the FAD site.

Belongs to the geranylgeranyl reductase family. DGGGPL reductase subfamily. FAD is required as a cofactor.

It catalyses the reaction a 2,3-bis-O-phytanyl-sn-glycerol 1-phospholipid + 8 A = a 2,3-bis-O-(geranylgeranyl)-sn-glycerol 1-phospholipid + 8 AH2. It carries out the reaction 2,3-bis-O-(phytanyl)-sn-glycerol 1-phosphate + 8 A = 2,3-bis-O-(geranylgeranyl)-sn-glycerol 1-phosphate + 8 AH2. The catalysed reaction is CDP-2,3-bis-O-(geranylgeranyl)-sn-glycerol + 8 AH2 = CDP-2,3-bis-O-(phytanyl)-sn-glycerol + 8 A. The enzyme catalyses archaetidylserine + 8 AH2 = 2,3-bis-O-phytanyl-sn-glycero-3-phospho-L-serine + 8 A. It participates in membrane lipid metabolism; glycerophospholipid metabolism. Its function is as follows. Is involved in the reduction of 2,3-digeranylgeranylglycerophospholipids (unsaturated archaeols) into 2,3-diphytanylglycerophospholipids (saturated archaeols) in the biosynthesis of archaeal membrane lipids. Catalyzes the formation of archaetidic acid (2,3-di-O-phytanyl-sn-glyceryl phosphate) from 2,3-di-O-geranylgeranylglyceryl phosphate (DGGGP) via the hydrogenation of each double bond of the isoprenoid chains. Is also probably able to reduce double bonds of geranyl groups in CDP-2,3-bis-O-(geranylgeranyl)-sn-glycerol and archaetidylserine, thus acting at various stages in the biosynthesis of archaeal membrane lipids. In Methanothermobacter thermautotrophicus (strain ATCC 29096 / DSM 1053 / JCM 10044 / NBRC 100330 / Delta H) (Methanobacterium thermoautotrophicum), this protein is Digeranylgeranylglycerophospholipid reductase 1.